The sequence spans 351 residues: Putative F-box protein At5g52610 (351 aa).

The 41-residue stretch at 1-41 (MISEDLLVEILLRLPVKPLARCLCVCKLWATIIRSRYFINL) folds into the F-box domain.

In Arabidopsis thaliana (Mouse-ear cress), this protein is Putative F-box protein At5g52610.